A 777-amino-acid polypeptide reads, in one-letter code: DNA ligase (777 aa).

NAD(+) is bound by residues 35 to 39 (DAEYD), 84 to 85 (SL), and E116. Residue K118 is the N6-AMP-lysine intermediate of the active site. NAD(+) contacts are provided by R139, E176, K293, and K317. Zn(2+) contacts are provided by C411, C414, C429, and C435. A BRCT domain is found at 691 to 777 (MESQPLEGQT…NQHGIDPGAL (87 aa)).

The protein belongs to the NAD-dependent DNA ligase family. LigA subfamily. It depends on Mg(2+) as a cofactor. Requires Mn(2+) as cofactor.

It catalyses the reaction NAD(+) + (deoxyribonucleotide)n-3'-hydroxyl + 5'-phospho-(deoxyribonucleotide)m = (deoxyribonucleotide)n+m + AMP + beta-nicotinamide D-nucleotide.. In terms of biological role, DNA ligase that catalyzes the formation of phosphodiester linkages between 5'-phosphoryl and 3'-hydroxyl groups in double-stranded DNA using NAD as a coenzyme and as the energy source for the reaction. It is essential for DNA replication and repair of damaged DNA. The polypeptide is DNA ligase (Alcanivorax borkumensis (strain ATCC 700651 / DSM 11573 / NCIMB 13689 / SK2)).